We begin with the raw amino-acid sequence, 258 residues long: Imidazole glycerol phosphate synthase subunit HisF (258 aa).

Residues Asp-11 and Asp-130 contribute to the active site.

The protein belongs to the HisA/HisF family. In terms of assembly, heterodimer of HisH and HisF.

Its subcellular location is the cytoplasm. It catalyses the reaction 5-[(5-phospho-1-deoxy-D-ribulos-1-ylimino)methylamino]-1-(5-phospho-beta-D-ribosyl)imidazole-4-carboxamide + L-glutamine = D-erythro-1-(imidazol-4-yl)glycerol 3-phosphate + 5-amino-1-(5-phospho-beta-D-ribosyl)imidazole-4-carboxamide + L-glutamate + H(+). The protein operates within amino-acid biosynthesis; L-histidine biosynthesis; L-histidine from 5-phospho-alpha-D-ribose 1-diphosphate: step 5/9. IGPS catalyzes the conversion of PRFAR and glutamine to IGP, AICAR and glutamate. The HisF subunit catalyzes the cyclization activity that produces IGP and AICAR from PRFAR using the ammonia provided by the HisH subunit. This is Imidazole glycerol phosphate synthase subunit HisF from Buchnera aphidicola subsp. Baizongia pistaciae (strain Bp).